A 276-amino-acid polypeptide reads, in one-letter code: 2,3,4,5-tetrahydropyridine-2,6-dicarboxylate N-succinyltransferase (276 aa).

Residues R104 and D141 each coordinate substrate.

This sequence belongs to the transferase hexapeptide repeat family. Homotrimer.

Its subcellular location is the cytoplasm. It carries out the reaction (S)-2,3,4,5-tetrahydrodipicolinate + succinyl-CoA + H2O = (S)-2-succinylamino-6-oxoheptanedioate + CoA. Its pathway is amino-acid biosynthesis; L-lysine biosynthesis via DAP pathway; LL-2,6-diaminopimelate from (S)-tetrahydrodipicolinate (succinylase route): step 1/3. The polypeptide is 2,3,4,5-tetrahydropyridine-2,6-dicarboxylate N-succinyltransferase (Pseudoalteromonas translucida (strain TAC 125)).